Reading from the N-terminus, the 184-residue chain is Probable maltose O-acetyltransferase (184 aa).

Asn84 serves as a coordination point for acetyl-CoA. The active-site Proton donor/acceptor is the His114. Acetyl-CoA contacts are provided by residues Gly141, Ser159, 164–165 (TK), Arg179, and Lys182.

This sequence belongs to the transferase hexapeptide repeat family. Homodimer.

The catalysed reaction is D-maltose + acetyl-CoA = 1-O-acetylmaltose + CoA. Its function is as follows. Catalyzes the CoA-dependent transfer of an acetyl group to maltose and other sugars. Acetylates glucose exclusively at the C6 position and maltose at the C6 position of the non-reducing end glucosyl moiety. Is able to acetylate maltooligosaccharides. The protein is Probable maltose O-acetyltransferase (maa) of Bacillus subtilis (strain 168).